We begin with the raw amino-acid sequence, 337 residues long: Mitochondrial amidoxime-reducing component 1 (337 aa).

Glycine 2 is lipidated: N-myristoyl glycine. The Mitochondrial matrix segment spans residues 2 to 20 (GAAGSSALARFVLLAQSRP). A helical; Signal-anchor for type II membrane protein transmembrane segment spans residues 21–40 (GWLGVAALGLTAVALGAVAW). The Cytoplasmic portion of the chain corresponds to 41 to 337 (RRAWPTRRRR…VGDPVYLLGQ (297 aa)). Residues lysine 67, serine 68, and arginine 92 each contribute to the Mo-molybdopterin site. The interval 93 to 183 (FWLVINQEGN…KSQPYRLVHF (91 aa)) is MOSC N-terminal region. The MOSC domain maps to 187-335 (MRPRRPHQIA…IKVGDPVYLL (149 aa)). Threonine 210, serine 211, arginine 238, asparagine 240, serine 271, arginine 272, cysteine 273, and tyrosine 317 together coordinate Mo-molybdopterin.

Component of a complex composed of cytochrome b5, NADH-cytochrome b5 reductase and MTARC1. Mo-molybdopterin is required as a cofactor.

It localises to the mitochondrion outer membrane. Its subcellular location is the membrane. It catalyses the reaction N(omega)-hydroxy-L-arginine + 2 Fe(II)-[cytochrome b5] + 2 H(+) = L-arginine + 2 Fe(III)-[cytochrome b5] + H2O. In terms of biological role, catalyzes the reduction of N-oxygenated molecules, acting as a counterpart of cytochrome P450 and flavin-containing monooxygenases in metabolic cycles. As a component of prodrug-converting system, reduces a multitude of N-hydroxylated prodrugs particularly amidoximes, leading to increased drug bioavailability. May be involved in mitochondrial N(omega)-hydroxy-L-arginine (NOHA) reduction, regulating endogenous nitric oxide levels and biosynthesis. Postulated to cleave the N-OH bond of N-hydroxylated substrates in concert with electron transfer from NADH to cytochrome b5 reductase then to cytochrome b5, the ultimate electron donor that primes the active site for substrate reduction. The chain is Mitochondrial amidoxime-reducing component 1 from Homo sapiens (Human).